The sequence spans 522 residues: Transactivator/viroplasmin protein (522 aa).

Residues 111–126 (QGIQIPQKSEPNSSVA) show a composition bias toward polar residues. Disordered regions lie at residues 111-133 (QGIQ…AESG) and 491-522 (SADS…KASG).

The protein belongs to the caulimoviridae viroplasmin family.

The protein resides in the host cytoplasm. Its function is as follows. Enhances the ribosomal termination-reinitiation event leading to the translation of major open reading frames on the polycistronic viral RNAs. The chain is Transactivator/viroplasmin protein from Arabidopsis thaliana (Mouse-ear cress).